Consider the following 397-residue polypeptide: Enoyl-[acyl-carrier-protein] reductase [NADH] (397 aa).

NAD(+) contacts are provided by residues 48–53 (GASTGY), 74–75 (FE), 111–112 (DA), and 139–140 (LA). Tyr-224 is a binding site for substrate. Catalysis depends on Tyr-234, which acts as the Proton donor. Residues Lys-243 and 272–274 (VVT) contribute to the NAD(+) site.

It belongs to the TER reductase family. In terms of assembly, monomer.

It catalyses the reaction a 2,3-saturated acyl-[ACP] + NAD(+) = a (2E)-enoyl-[ACP] + NADH + H(+). The protein operates within lipid metabolism; fatty acid biosynthesis. Functionally, involved in the final reduction of the elongation cycle of fatty acid synthesis (FAS II). Catalyzes the reduction of a carbon-carbon double bond in an enoyl moiety that is covalently linked to an acyl carrier protein (ACP). The sequence is that of Enoyl-[acyl-carrier-protein] reductase [NADH] from Pseudomonas fluorescens (strain SBW25).